We begin with the raw amino-acid sequence, 46 residues long: IRTHTLPCKCPICGKAFSRPWLLQGHTTHHTGEKPFSCQHCNRAFA.

C2H2-type zinc fingers lie at residues 1 to 4 (IRTH), 8 to 30 (CKCP…TTHH), and 36 to 46 (FSCQHCNRAFA).

This sequence belongs to the snail C2H2-type zinc-finger protein family.

Its subcellular location is the nucleus. This chain is Escargot/snail protein homolog, found in Oryzias latipes (Japanese rice fish).